The chain runs to 122 residues: Small ribosomal subunit protein uS13 (122 aa).

Residues 93–122 (RRGLPVRGQRTKTNARTRKGPKKTIAGKKK) form a disordered region.

The protein belongs to the universal ribosomal protein uS13 family. Part of the 30S ribosomal subunit. Forms a loose heterodimer with protein S19. Forms two bridges to the 50S subunit in the 70S ribosome.

Located at the top of the head of the 30S subunit, it contacts several helices of the 16S rRNA. In the 70S ribosome it contacts the 23S rRNA (bridge B1a) and protein L5 of the 50S subunit (bridge B1b), connecting the 2 subunits; these bridges are implicated in subunit movement. Contacts the tRNAs in the A and P-sites. This Corynebacterium jeikeium (strain K411) protein is Small ribosomal subunit protein uS13.